A 122-amino-acid chain; its full sequence is Large ribosomal subunit protein bL12 (122 aa).

Belongs to the bacterial ribosomal protein bL12 family. In terms of assembly, homodimer. Part of the ribosomal stalk of the 50S ribosomal subunit. Forms a multimeric L10(L12)X complex, where L10 forms an elongated spine to which 2 to 4 L12 dimers bind in a sequential fashion. Binds GTP-bound translation factors.

Forms part of the ribosomal stalk which helps the ribosome interact with GTP-bound translation factors. Is thus essential for accurate translation. In Actinobacillus succinogenes (strain ATCC 55618 / DSM 22257 / CCUG 43843 / 130Z), this protein is Large ribosomal subunit protein bL12.